The chain runs to 64 residues: Large ribosomal subunit protein bL33m (64 aa).

It belongs to the bacterial ribosomal protein bL33 family. As to quaternary structure, component of the mitochondrial ribosome large subunit (39S) which comprises a 16S rRNA and about 50 distinct proteins.

The protein resides in the mitochondrion. This chain is Large ribosomal subunit protein bL33m (mRpL33), found in Drosophila melanogaster (Fruit fly).